The sequence spans 269 residues: Hydroxypyruvate/pyruvate aldolase (269 aa).

The active-site Proton acceptor is the H47. Residues E151 and D177 each contribute to the a divalent metal cation site.

The protein belongs to the HpcH/HpaI aldolase family. Requires a divalent metal cation as cofactor.

The enzyme catalyses D-glyceraldehyde + 3-hydroxypyruvate = 2-dehydro-D-gluconate. It carries out the reaction D-glyceraldehyde + 3-hydroxypyruvate = (3R,4S,5R)-3,4,5,6-tetrahydroxy-2-oxohexanoate. It catalyses the reaction D-glyceraldehyde + 3-hydroxypyruvate = 2-dehydro-D-galactonate. The catalysed reaction is D-glyceraldehyde + pyruvate = 2-dehydro-3-deoxy-L-galactonate. The enzyme catalyses 2-dehydro-3-deoxy-D-gluconate = D-glyceraldehyde + pyruvate. Its function is as follows. Aldolase which can catalyze in vitro the aldolisation reaction between hydroxypyruvate (HPA) or pyruvate (PA) and D-glyceraldehyde (D-GA). The condensation of hydroxypyruvate and D-glyceraldehyde produces 2-dehydro-D-gluconate as the major product, (3R,4S,5R)-3,4,5,6-tetrahydroxy-2-oxohexanoate and 2-dehydro-D-galactonate. The condensation of pyruvate and D-glyceraldehyde produces 2-dehydro-3-deoxy-L-galactonate as the major product and 2-dehydro-3-deoxy-D-gluconate. The sequence is that of Hydroxypyruvate/pyruvate aldolase from Cupriavidus necator (strain ATCC 17699 / DSM 428 / KCTC 22496 / NCIMB 10442 / H16 / Stanier 337) (Ralstonia eutropha).